Here is a 311-residue protein sequence, read N- to C-terminus: Vomeronasal type-1 receptor 3 (311 aa).

Residues 1–5 (MASKD) are Extracellular-facing. Residues 6-26 (FAIGMILLSQIMVGFLGNFFL) traverse the membrane as a helical segment. Over 27–51 (LYHYSFLCFTRGMLQSTDLILKHLT) the chain is Cytoplasmic. Residues 52–72 (IANSLVILSKGIPQTMAAFGL) traverse the membrane as a helical segment. Residues 73–92 (KDSLSDIGCKFVFYVHRVGR) are Extracellular-facing. The helical transmembrane segment at 93-113 (AVCVGNACLLSVFQVITISPS) threads the bilayer. Residues 114-130 (EFRWAELKLHAHKYIRS) lie on the Cytoplasmic side of the membrane. A helical transmembrane segment spans residues 131–151 (FILVLCWILNTLVNITVLLHV). Topologically, residues 152-187 (TGKWNSINSTKTNDYGYCSGGSRSRIPHSLHIVLLS) are extracellular. Residue Asn-159 is glycosylated (N-linked (GlcNAc...) asparagine). Residues 188–208 (SLDVLCLGLMTLASGSMVFIL) form a helical membrane-spanning segment. At 209–232 (HRHKQQVQHIHGTNLSARSSPESR) the chain is on the cytoplasmic side. Residues 233–249 (VTQSILVLVSTLCYFTR) form a helical membrane-spanning segment. Residues 250–264 (SPPSLHMSLFPNPSW) are Extracellular-facing. The chain crosses the membrane as a helical span at residues 265–285 (WLLNTSALITACFPMVSPFVL). Residues 286–311 (MSRHPRIPRLGSACCGRNPQFPKLVR) are Cytoplasmic-facing.

It belongs to the G-protein coupled receptor 1 family.

The protein resides in the cell membrane. Putative pheromone receptor. In Homo sapiens (Human), this protein is Vomeronasal type-1 receptor 3 (VN1R3).